The primary structure comprises 339 residues: Phosphate acyltransferase (339 aa).

This sequence belongs to the PlsX family. Homodimer. Probably interacts with PlsY.

It is found in the cytoplasm. It carries out the reaction a fatty acyl-[ACP] + phosphate = an acyl phosphate + holo-[ACP]. It participates in lipid metabolism; phospholipid metabolism. Its function is as follows. Catalyzes the reversible formation of acyl-phosphate (acyl-PO(4)) from acyl-[acyl-carrier-protein] (acyl-ACP). This enzyme utilizes acyl-ACP as fatty acyl donor, but not acyl-CoA. The chain is Phosphate acyltransferase from Clostridium perfringens (strain SM101 / Type A).